The following is a 386-amino-acid chain: Putative F-box/kelch-repeat protein At3g17280 (386 aa).

The 48-residue stretch at methionine 1 to leucine 48 folds into the F-box domain. Kelch repeat units lie at residues serine 155 to serine 203 and arginine 340 to valine 386.

The polypeptide is Putative F-box/kelch-repeat protein At3g17280 (Arabidopsis thaliana (Mouse-ear cress)).